The primary structure comprises 225 residues: Transmembrane protein C16orf54 homolog (225 aa).

Residues 32-52 (PCIPIMLGLASLTAFFIITTA) traverse the membrane as a helical segment. 2 disordered regions span residues 106 to 163 (DRAP…ERPH) and 178 to 200 (EAGL…EPDW). Residues T113 and T117 each carry the phosphothreonine modification. The span at 122-140 (ATAPPATSAPYSSLSSLVP) shows a compositional bias: low complexity. Residue S195 is modified to Phosphoserine.

It is found in the membrane. This is Transmembrane protein C16orf54 homolog from Mus musculus (Mouse).